Consider the following 309-residue polypeptide: DNA-directed RNA polymerase subunit alpha (309 aa).

An alpha N-terminal domain (alpha-NTD) region spans residues Met-1 to Ser-227. Positions Glu-237 to Ser-309 are alpha C-terminal domain (alpha-CTD).

It belongs to the RNA polymerase alpha chain family. In cyanobacteria the RNAP catalytic core is composed of 2 alpha, 1 beta, 1 beta', 1 gamma and 1 omega subunit. When a sigma factor is associated with the core the holoenzyme is formed, which can initiate transcription.

The catalysed reaction is RNA(n) + a ribonucleoside 5'-triphosphate = RNA(n+1) + diphosphate. DNA-dependent RNA polymerase catalyzes the transcription of DNA into RNA using the four ribonucleoside triphosphates as substrates. The protein is DNA-directed RNA polymerase subunit alpha of Synechococcus elongatus (strain ATCC 33912 / PCC 7942 / FACHB-805) (Anacystis nidulans R2).